The primary structure comprises 303 residues: UDP-3-O-acyl-N-acetylglucosamine deacetylase (303 aa).

Positions 78, 237, and 241 each coordinate Zn(2+). Catalysis depends on H264, which acts as the Proton donor.

Belongs to the LpxC family. Zn(2+) serves as cofactor.

The enzyme catalyses a UDP-3-O-[(3R)-3-hydroxyacyl]-N-acetyl-alpha-D-glucosamine + H2O = a UDP-3-O-[(3R)-3-hydroxyacyl]-alpha-D-glucosamine + acetate. It participates in glycolipid biosynthesis; lipid IV(A) biosynthesis; lipid IV(A) from (3R)-3-hydroxytetradecanoyl-[acyl-carrier-protein] and UDP-N-acetyl-alpha-D-glucosamine: step 2/6. Its function is as follows. Catalyzes the hydrolysis of UDP-3-O-myristoyl-N-acetylglucosamine to form UDP-3-O-myristoylglucosamine and acetate, the committed step in lipid A biosynthesis. In Xanthomonas campestris pv. campestris (strain 8004), this protein is UDP-3-O-acyl-N-acetylglucosamine deacetylase.